A 380-amino-acid chain; its full sequence is 3-isopropylmalate dehydratase large subunit (380 aa).

[4Fe-4S] cluster-binding residues include Cys-262, Cys-320, and Cys-323.

This sequence belongs to the aconitase/IPM isomerase family. LeuC type 2 subfamily. In terms of assembly, heterodimer of LeuC and LeuD. Requires [4Fe-4S] cluster as cofactor.

The enzyme catalyses (2R,3S)-3-isopropylmalate = (2S)-2-isopropylmalate. Its pathway is amino-acid biosynthesis; L-leucine biosynthesis; L-leucine from 3-methyl-2-oxobutanoate: step 2/4. Functionally, catalyzes the isomerization between 2-isopropylmalate and 3-isopropylmalate, via the formation of 2-isopropylmaleate. The sequence is that of 3-isopropylmalate dehydratase large subunit from Thermococcus kodakarensis (strain ATCC BAA-918 / JCM 12380 / KOD1) (Pyrococcus kodakaraensis (strain KOD1)).